Here is a 602-residue protein sequence, read N- to C-terminus: Elongation factor 4 (602 aa).

Residues 8–189 enclose the tr-type G domain; sequence KNIRNFSIIA…KIITTIPAPS (182 aa). Residues 20–25 and 136–139 each bind GTP; these read DHGKST and NKID.

It belongs to the TRAFAC class translation factor GTPase superfamily. Classic translation factor GTPase family. LepA subfamily.

The protein resides in the cell inner membrane. The enzyme catalyses GTP + H2O = GDP + phosphate + H(+). Its function is as follows. Required for accurate and efficient protein synthesis under certain stress conditions. May act as a fidelity factor of the translation reaction, by catalyzing a one-codon backward translocation of tRNAs on improperly translocated ribosomes. Back-translocation proceeds from a post-translocation (POST) complex to a pre-translocation (PRE) complex, thus giving elongation factor G a second chance to translocate the tRNAs correctly. Binds to ribosomes in a GTP-dependent manner. This is Elongation factor 4 from Helicobacter pylori (strain Shi470).